Here is a 284-residue protein sequence, read N- to C-terminus: 4-diphosphocytidyl-2-C-methyl-D-erythritol kinase (284 aa).

Lys13 is an active-site residue. Residue 96–106 (PMGGGLGGGSS) participates in ATP binding. Residue Asp138 is part of the active site.

The protein belongs to the GHMP kinase family. IspE subfamily.

It carries out the reaction 4-CDP-2-C-methyl-D-erythritol + ATP = 4-CDP-2-C-methyl-D-erythritol 2-phosphate + ADP + H(+). Its pathway is isoprenoid biosynthesis; isopentenyl diphosphate biosynthesis via DXP pathway; isopentenyl diphosphate from 1-deoxy-D-xylulose 5-phosphate: step 3/6. In terms of biological role, catalyzes the phosphorylation of the position 2 hydroxy group of 4-diphosphocytidyl-2C-methyl-D-erythritol. The chain is 4-diphosphocytidyl-2-C-methyl-D-erythritol kinase from Chromobacterium violaceum (strain ATCC 12472 / DSM 30191 / JCM 1249 / CCUG 213 / NBRC 12614 / NCIMB 9131 / NCTC 9757 / MK).